Reading from the N-terminus, the 167-residue chain is Photosystem I assembly protein Ycf3 (167 aa).

TPR repeat units follow at residues 35–68, 72–105, and 120–153; these read AFTY…EVDA, SYIF…NPSL, and GEQA…APTN.

This sequence belongs to the Ycf3 family.

The protein localises to the plastid. The protein resides in the chloroplast thylakoid membrane. Its function is as follows. Essential for the assembly of the photosystem I (PSI) complex. May act as a chaperone-like factor to guide the assembly of the PSI subunits. This Pleurastrum terricola (Filamentous green alga) protein is Photosystem I assembly protein Ycf3.